A 104-amino-acid chain; its full sequence is Photosystem II reaction center Psb28 protein (104 aa).

The protein belongs to the Psb28 family. As to quaternary structure, part of the photosystem II complex.

Its subcellular location is the cellular thylakoid membrane. This chain is Photosystem II reaction center Psb28 protein, found in Synechococcus sp. (strain JA-2-3B'a(2-13)) (Cyanobacteria bacterium Yellowstone B-Prime).